The sequence spans 225 residues: Biosynthetic peptidoglycan transglycosylase (225 aa).

A helical membrane pass occupies residues 8-28 (VLLIFIGAILFIQLWIFSSLV).

Belongs to the glycosyltransferase 51 family.

It is found in the cell inner membrane. It catalyses the reaction [GlcNAc-(1-&gt;4)-Mur2Ac(oyl-L-Ala-gamma-D-Glu-L-Lys-D-Ala-D-Ala)](n)-di-trans,octa-cis-undecaprenyl diphosphate + beta-D-GlcNAc-(1-&gt;4)-Mur2Ac(oyl-L-Ala-gamma-D-Glu-L-Lys-D-Ala-D-Ala)-di-trans,octa-cis-undecaprenyl diphosphate = [GlcNAc-(1-&gt;4)-Mur2Ac(oyl-L-Ala-gamma-D-Glu-L-Lys-D-Ala-D-Ala)](n+1)-di-trans,octa-cis-undecaprenyl diphosphate + di-trans,octa-cis-undecaprenyl diphosphate + H(+). Its pathway is cell wall biogenesis; peptidoglycan biosynthesis. Peptidoglycan polymerase that catalyzes glycan chain elongation from lipid-linked precursors. The sequence is that of Biosynthetic peptidoglycan transglycosylase from Acinetobacter baumannii (strain ATCC 17978 / DSM 105126 / CIP 53.77 / LMG 1025 / NCDC KC755 / 5377).